A 277-amino-acid chain; its full sequence is Tryptophan synthase alpha chain (277 aa).

Catalysis depends on proton acceptor residues Glu50 and Asp61.

Belongs to the TrpA family. Tetramer of two alpha and two beta chains.

It catalyses the reaction (1S,2R)-1-C-(indol-3-yl)glycerol 3-phosphate + L-serine = D-glyceraldehyde 3-phosphate + L-tryptophan + H2O. It functions in the pathway amino-acid biosynthesis; L-tryptophan biosynthesis; L-tryptophan from chorismate: step 5/5. Its function is as follows. The alpha subunit is responsible for the aldol cleavage of indoleglycerol phosphate to indole and glyceraldehyde 3-phosphate. The polypeptide is Tryptophan synthase alpha chain (Beijerinckia indica subsp. indica (strain ATCC 9039 / DSM 1715 / NCIMB 8712)).